The following is a 373-amino-acid chain: ORC1-type DNA replication protein 2 (373 aa).

Residues 63–67 (TGKTS), tyrosine 205, and arginine 217 contribute to the ATP site.

This sequence belongs to the CDC6/cdc18 family.

Involved in regulation of DNA replication. The protein is ORC1-type DNA replication protein 2 (cdc6-2) of Methanosarcina acetivorans (strain ATCC 35395 / DSM 2834 / JCM 12185 / C2A).